The following is a 568-amino-acid chain: Zinc finger protein 583 (568 aa).

In terms of domain architecture, KRAB spans 6–77; the sequence is LTFEDVSVNF…QKKGARDTCP (72 aa). 12 C2H2-type zinc fingers span residues 211–233, 239–261, 267–289, 295–317, 323–345, 351–373, 379–401, 407–429, 435–457, 463–485, 491–513, and 519–541; these read LKCS…QRIH, YACV…KRIH, YECK…QRVH, YQCK…QRIH, FECI…QRIH, YVCH…QRIH, YECA…QRSH, YICK…QRIH, YECN…QRIH, and YECK…EKVH.

This sequence belongs to the krueppel C2H2-type zinc-finger protein family.

The protein resides in the nucleus. Functionally, may be involved in transcriptional regulation. The protein is Zinc finger protein 583 (Znf583) of Mus musculus (Mouse).